Here is a 496-residue protein sequence, read N- to C-terminus: Costunolide synthase (496 aa).

Residues Phe-4 to Ala-24 traverse the membrane as a helical; Signal-anchor for type II membrane protein segment. 4 N-linked (GlcNAc...) asparagine glycosylation sites follow: Asn-26, Asn-168, Asn-280, and Asn-412. Residue Cys-434 participates in heme binding.

This sequence belongs to the cytochrome P450 family. It depends on heme as a cofactor. Expressed in floral glandular trichomes.

The protein localises to the membrane. The enzyme catalyses germacra-1(10),4,11(13)-trien-12-oate + reduced [NADPH--hemoprotein reductase] + O2 = (+)-costunolide + oxidized [NADPH--hemoprotein reductase] + 2 H2O. It participates in secondary metabolite biosynthesis; terpenoid biosynthesis. Involved in the biosynthesis of germacrene-derived sesquiterpene lactones. Component of the parthenolide biosynthetic pathway; parthenolide and conjugates are promising anti-cancer drugs highly active against colon cancer cells. Hydroxylates germacrene A acid to 6-alpha-hydroxy-germacrene A acid, a precursor of sesquiterpene lactones that spontaneously undergoes a lactonization which yields costunolide. This Tanacetum parthenium (Feverfew) protein is Costunolide synthase.